The chain runs to 198 residues: Phosphoheptose isomerase (198 aa).

In terms of domain architecture, SIS spans 40 to 198; the sequence is IVTALRSGRK…IEAALMQDLS (159 aa). 55–57 provides a ligand contact to substrate; sequence NGG. Residues H64 and E68 each coordinate Zn(2+). Residues E68, 97 to 98, 123 to 125, S128, and Q175 contribute to the substrate site; these read ND and STS. Zn(2+)-binding residues include Q175 and H183.

Belongs to the SIS family. GmhA subfamily. Homotetramer. It depends on Zn(2+) as a cofactor.

It is found in the cytoplasm. The catalysed reaction is 2 D-sedoheptulose 7-phosphate = D-glycero-alpha-D-manno-heptose 7-phosphate + D-glycero-beta-D-manno-heptose 7-phosphate. It participates in carbohydrate biosynthesis; D-glycero-D-manno-heptose 7-phosphate biosynthesis; D-glycero-alpha-D-manno-heptose 7-phosphate and D-glycero-beta-D-manno-heptose 7-phosphate from sedoheptulose 7-phosphate: step 1/1. Its function is as follows. Catalyzes the isomerization of sedoheptulose 7-phosphate in D-glycero-D-manno-heptose 7-phosphate. This chain is Phosphoheptose isomerase, found in Bradyrhizobium sp. (strain BTAi1 / ATCC BAA-1182).